We begin with the raw amino-acid sequence, 98 residues long: DNA-binding protein Fis (98 aa).

Residues 74–93 (QTRAAQMMGINRGTLRKKLK) constitute a DNA-binding region (H-T-H motif).

It belongs to the transcriptional regulatory Fis family. As to quaternary structure, homodimer.

Functionally, activates ribosomal RNA transcription. Plays a direct role in upstream activation of rRNA promoters. The chain is DNA-binding protein Fis from Sodalis glossinidius (strain morsitans).